The primary structure comprises 1574 residues: MEVSRRKTPPRPPYPAAPLPLIAYLLALAAPARGADEPVWRSEQAIGAIAASRADGVFVASGSCLDQLDYSLKNRLSRLYRDQAGNCTEPVSLAPPARPRPGSSFSKLLLPYREGATGLEGLLLTGWTFDRGACEVRPLGNLNRSSLRNGTEVVSCHPQGSTAGVVYRASGTDLWYLAVAATYVLPEPETANRCNPAASDRDTAIALKNTEGRSLATQELGRLKLRGSAGSLHFVDAFLWNGSVYFPYYPYNYTSGAATGWPSMARIAQSTEVLFQGQAALDCDHGHPEGRRLLLSSSLVEAVDIWAGVFSAATGEGQERRSPATTALCLFRMSEIQAHARSCSWDFQATEHNCKEGDRPERVQPIASSTLIHSDLTSVYGTVVMNRTVLFLGTGDGQLLKVVLGENLTSNCPEVIYEIKEETPVFYKLVPHPMKNIYIYLTAGKEVRRIPVANCSKRKSCSECLAAADPHCGWCLPLQRCTFQGDCTHAGSFENWLDISSGPKKCPKIQILRSLRERTTVTIVGSISARHSECVVKNADTGKLLCQGRSQLNWTCACNIPSRPSYNVLVVNATFSFPSWNLSERFNFTNCASLKECPACIRSGCAWCKRDKKCIHPFTPCEPSDYERNQELCQVAVEKSPKDSGGGRVKESKRNRTDGAVQVFYIKAIEPQKISTLGKSNVIVTGANFTQASNITMILRGTSTCERDVIRVSHVLNDTHMKFSLPSSRKEMKDVCIQFDGGTCSSAGALSYIALPHCSLIVPATTWISGGQNITIMGRNFDVIDNLIISHELKGNANVNINVSEYCAATFCRFLAPNLKSSKVRTNVAVKLRVQDTYLDCGTLQYLEDPRFTGYRVESEIDTELEVKIQKENDNFNISKDDIDITLFHGENKQFNCSFENITRNQDLTTILCKIKSIKNANTIASSSKKVRVKLGNLELYVEQESVPSTWYFLIALPILLAIVIVVAVVVTRYKSKELSRKQSQQLELLESELRKEIRDGFAELQMDKLDVVDSFGTVPFLDYKHFALRTFFPESGGFTHIFTEDMHNRDANDKNESLTALDALICNKSFLVTVIHTLEKQKNFSVKDRCLFASFLTIALQTKLVYLTSILEVLTRDLMEQCSNMQPKLMLRRTESVVEKLLTNWMSVCLSGFLRETVGEPFYLLVTTLNQKINKGPVDVITCKALYTLNEDWLLWQVPEFNTVALNVVFEKIPENESADVCRNISVNVLDCDTIGQAKEKVFQAFLSKNGSPYGLQLNEIGLELQVGTRQKELLDIDSSSVILEDGITKLNTIGHYEISNGSTIKVFKKIANFTSDVEYSDDHCHLILPDSEAFQVVQGKRHRGKHKFKVKEMYLTKLLSTKVAIHSVLEKLFRSIWSLPNSRAPFAIKYFFDFLDAQAENKKITDPDVVHIWKTNSLPLRFWVNILKNPQFVFDIKKTPHIDSCLSVIAQAFMDAFSLTEQQLGKEAPTNKLLYAKDIPTYKEEVKSYYKAIRDLPPLSSLEMEEFLTQESKKHENEFNEEVALTEIYKYIVKYFDEILNKLERERGLEEAQKQLLHVKVLFDEKKKCKWM.

A signal peptide spans 1–34 (MEVSRRKTPPRPPYPAAPLPLIAYLLALAAPARG). Positions 35–452 (ADEPVWRSEQ…AGKEVRRIPV (418 aa)) constitute a Sema domain. The Extracellular portion of the chain corresponds to 35–950 (ADEPVWRSEQ…YVEQESVPST (916 aa)). A disulfide bridge links Cys-64 with Cys-87. N-linked (GlcNAc...) asparagine glycosylation is found at Asn-86, Asn-143, and Asn-149. A disulfide bond links Cys-156 and Cys-194. An N-linked (GlcNAc...) asparagine glycan is attached at Asn-252. A disulfide bridge links Cys-283 with Cys-329. N-linked (GlcNAc...) asparagine glycosylation is found at Asn-386 and Asn-407. Cystine bridges form between Cys-455–Cys-472, Cys-461–Cys-506, Cys-464–Cys-481, and Cys-475–Cys-487. Asn-694, Asn-773, and Asn-802 each carry an N-linked (GlcNAc...) asparagine glycan. Residues 951-971 (WYFLIALPILLAIVIVVAVVV) traverse the membrane as a helical segment. The Cytoplasmic portion of the chain corresponds to 972–1574 (TRYKSKELSR…FDEKKKCKWM (603 aa)). At Ser-984 the chain carries Phosphoserine.

This sequence belongs to the plexin family. As to quaternary structure, monomer. Homodimer. Interacts with SEMA7A. Detected on dendritic cells, skin Langerhans cells and neutrophils (at protein level).

The protein resides in the membrane. Functionally, receptor for SEMA7A, for vaccinia virus semaphorin A39R and for herpesvirus Sema protein. Binding of semaphorins triggers cellular responses leading to the rearrangement of the cytoskeleton and to secretion of IL6 and IL8. This Mus musculus (Mouse) protein is Plexin-C1 (Plxnc1).